The primary structure comprises 471 residues: MANKAVNDFILAMNYDKKKLLTHQGESIENRFIKEGNQLPDEFVVIERKKRSLSTNTSDISVTATNDSRLYPGALLVVDETLLENNPTLLAVDRAPMTYSIDLPGLASSDSFLQVEDPSNSSVRGAVNDLLAKWHQDYGQVNNVPARMQYEKITAHSMEQLKVKFGSDFEKTGNSLDIDFNSVHSGEKQIQIVNFKQIYYTVSVDAVKNPGDVFQDTVTVEDLKQRGISAERPLVYISSVAYGRQVYLKLETTSKSDEVEAAFEALIKGVKVAPQTEWKQILDNTEVKAVILGGDPSSGARVVTGKVDMVEDLIQEGSRFTADHPGLPISYTTSFLRDNVVATFQNSTDYVETKVTAYRNGDLLLDHSGAYVAQYYITWDELSYDHQGKEVLTPKAWDRNGQDLTAHFTTSIPLKGNVRNLSVKIRECTGLAWEWWRTVYEKTDLPLVRKRTISIWGTTLYPQVEDKVEND.

4 beta stranded membrane passes run 158 to 171 (MEQLKVKFGSDFEK), 178 to 187 (IDFNSVHSGE), 256 to 265 (SDEVEAAFEA), and 273 to 285 (APQTEWKQILDNT). A Conserved undecapeptide motif is present at residues 427–437 (ECTGLAWEWWR). The Cholesterol binding motif lies at 459–460 (TL).

The protein belongs to the cholesterol-dependent cytolysin family. As to quaternary structure, elongated monomers align along their lengths, indicating intersubunit contacts and suggesting the prepore structure. Modeling based on cryo-EM shows a homooligomeric pore complex containing 38-44 subunits; when inserted in the host membrane. The size of isolated pores is detergent-dependent; in amphipol A8-35 homogenous rings form with 42 subunits.

It localises to the secreted. The protein localises to the host cell membrane. With respect to regulation, erythrocytes hemolysis is inhibited by cholesterol. Functionally, a cholesterol-dependent toxin that causes cytolysis by forming pores in cholesterol-containing host membranes. After binding to target membranes, the protein undergoes a major conformation change, leading to its insertion in the host membrane and formation of an oligomeric pore complex. Cholesterol is required for binding to host membranes, membrane insertion and pore formation; cholesterol binding is mediated by a Thr-Leu pair in the C-terminus. Can be reversibly inactivated by oxidation. In Streptococcus pneumoniae serotype 2 (strain D39 / NCTC 7466), this protein is Pneumolysin (ply).